The following is a 359-amino-acid chain: Probable dual-specificity RNA methyltransferase RlmN (359 aa).

Catalysis depends on Glu-91, which acts as the Proton acceptor. The region spanning 97–329 (QHYGHSVCVT…KKNGVNCVVR (233 aa)) is the Radical SAM core domain. An intrachain disulfide couples Cys-104 to Cys-340. [4Fe-4S] cluster contacts are provided by Cys-111, Cys-115, and Cys-118. Residues 163-164 (GE), Ser-195, 218-220 (SLH), and Asn-296 contribute to the S-adenosyl-L-methionine site. The active-site S-methylcysteine intermediate is Cys-340.

Belongs to the radical SAM superfamily. RlmN family. The cofactor is [4Fe-4S] cluster.

It is found in the cytoplasm. The enzyme catalyses adenosine(2503) in 23S rRNA + 2 reduced [2Fe-2S]-[ferredoxin] + 2 S-adenosyl-L-methionine = 2-methyladenosine(2503) in 23S rRNA + 5'-deoxyadenosine + L-methionine + 2 oxidized [2Fe-2S]-[ferredoxin] + S-adenosyl-L-homocysteine. It carries out the reaction adenosine(37) in tRNA + 2 reduced [2Fe-2S]-[ferredoxin] + 2 S-adenosyl-L-methionine = 2-methyladenosine(37) in tRNA + 5'-deoxyadenosine + L-methionine + 2 oxidized [2Fe-2S]-[ferredoxin] + S-adenosyl-L-homocysteine. In terms of biological role, specifically methylates position 2 of adenine 2503 in 23S rRNA and position 2 of adenine 37 in tRNAs. In Streptococcus pyogenes serotype M2 (strain MGAS10270), this protein is Probable dual-specificity RNA methyltransferase RlmN.